A 542-amino-acid polypeptide reads, in one-letter code: Doublesex- and mab-3-related transcription factor A2 (542 aa).

A DNA-binding region (DM) is located at residues 70–117 (CARCRNHGVVSALKGHKRYCRWKDCLCAKCTLIAERQRVMAAQVALRR). Residues 201-316 (LQAGRPGSPL…GGSGPRQRTP (116 aa)) form a disordered region. The 36-residue stretch at 314–349 (RTPLDILTRVFPGHRRGVLELVLQGCGGDVVQAIEQ) folds into the DMA domain.

The protein belongs to the DMRT family. Expressed in testis.

It localises to the nucleus. Functionally, may be involved in sexual development. This is Doublesex- and mab-3-related transcription factor A2 (DMRTA2) from Homo sapiens (Human).